Reading from the N-terminus, the 805-residue chain is Phosphoinositide 3-kinase adapter protein 1 (805 aa).

Positions 8-145 (RGCDILIVYS…AVKKAISEDS (138 aa)) constitute a TIR domain. The interval 10 to 144 (CDILIVYSPD…AAVKKAISED (135 aa)) is necessary and sufficient to mediate inhibition of NF-kappa-B downstream of activated TLRs; may mediate interaction with MYD88 and TIRAP. The segment at 145–165 (SGCDSVTDTEPEDEKVVSYSK) is disordered. The 137-residue stretch at 181-317 (VQPDRIRCGA…NIPASGLHLF (137 aa)) folds into the DBB domain. A Phosphotyrosine modification is found at Tyr263. Residues Tyr419, Tyr444, and Tyr459 each carry the phosphotyrosine; by SYK modification. Phosphotyrosine; by ABL1 is present on Tyr513. The disordered stretch occupies residues 527 to 547 (ASRPPVPVPRPETTAPGAHQL). Residues Tyr553 and Tyr570 each carry the phosphotyrosine; by ABL1 modification. Residues 571 to 590 (VSSESIRKGPPVRPWRDRPQ) form a disordered region. Tyr594 is modified (phosphotyrosine; by ABL1). The residue at position 642 (Ser642) is a Phosphoserine. Positions 645 to 667 (FQQENLKRLRDSITRRQREKQKS) form a coiled coil. Residues 654-672 (RDSITRRQREKQKSGKQTD) show a composition bias toward basic and acidic residues. The segment at 654–679 (RDSITRRQREKQKSGKQTDLEITVPI) is disordered. Residue Tyr694 is modified to Phosphotyrosine; by ABL1. A disordered region spans residues 697 to 805 (GPRKSVIPPR…PPPPVPPRGR (109 aa)). A compositionally biased stretch (basic and acidic residues) spans 707–716 (TELRRGDWKT). Residues 717–740 (DSTSSTASSTSNRSSTRSLLSVSS) are compositionally biased toward low complexity. Ser718 is subject to Phosphoserine. Pro residues predominate over residues 795-805 (HPPPPVPPRGR).

Homooligomer. Interacts (phosphorylated on tyrosine residues within YXXM motifs) with PIK3R1 (via SH2 domain); required for BCR- and TLR-mediated activation of phosphoinositide 3-kinase. Interacts (via polyproline C-terminal region) with ABI1 (via SH3 domain); the interaction promotes phosphorylation of PIK3AP1 by ABL1. May interact with MYD88 and TIRAP. In terms of processing, constitutively phosphorylated. Phosphorylated on tyrosine residues in C-terminal region by ABL1. Phosphorylated on tyrosine residues within the YXXM motifs by BTK and SYK. Isoform 1 and isoform 2 are phosphorylated on tyrosine residues, most likely within the YXXM motifs, via CD19 activation. Toll-like receptor activation induces appearance of a phosphorylated form associated with membranes. Expressed in natural killer (NK) cells.

Its subcellular location is the cytoplasm. The protein localises to the cell membrane. Functionally, signaling adapter that contributes to B-cell development by linking B-cell receptor (BCR) signaling to the phosphoinositide 3-kinase (PI3K)-Akt signaling pathway. Has a complementary role to the BCR coreceptor CD19, coupling BCR and PI3K activation by providing a docking site for the PI3K subunit PIK3R1. Alternatively, links Toll-like receptor (TLR) signaling to PI3K activation, a process preventing excessive inflammatory cytokine production. Also involved in the activation of PI3K in natural killer cells. May be involved in the survival of mature B-cells via activation of REL. This is Phosphoinositide 3-kinase adapter protein 1 (PIK3AP1) from Homo sapiens (Human).